Reading from the N-terminus, the 217-residue chain is Redox-sensing transcriptional repressor Rex (217 aa).

Residues Arg17–Phe56 constitute a DNA-binding region (H-T-H motif). Gly91–Gly96 is a binding site for NAD(+).

This sequence belongs to the transcriptional regulatory Rex family. Homodimer.

It is found in the cytoplasm. Modulates transcription in response to changes in cellular NADH/NAD(+) redox state. This chain is Redox-sensing transcriptional repressor Rex, found in Caldicellulosiruptor bescii (strain ATCC BAA-1888 / DSM 6725 / KCTC 15123 / Z-1320) (Anaerocellum thermophilum).